A 259-amino-acid polypeptide reads, in one-letter code: MNSDVSSSEHELSQDGSSQNNPSENSVSSPNSNESVNQVELSDNPEVEPQVKNDSVDTANEQSSTSCESNIKGSDTEARLQQLEKEHETLNSQYMRIAADFDNFRKRQTRDQDDLKIQLTCTTLSEILPIVDNFERARQQLNPEGEEAQALHRSYQGLYKQLVEVLKNLGVAPMRVVDQAFDPSLHEAVMREPSDEKAEDIVIEELQRGYHLNGRVLRHALVKVSMGPGPKVINEEIPDQSASNQELSESVDGSTKDEN.

Disordered stretches follow at residues 1-74 (MNSD…IKGS) and 228-259 (PGPKVINEEIPDQSASNQELSESVDGSTKDEN). Residues 17-40 (SSQNNPSENSVSSPNSNESVNQVE) are compositionally biased toward low complexity. Polar residues-rich tracts occupy residues 56–73 (VDTANEQSSTSCESNIKG) and 240–253 (QSASNQELSESVDG).

The protein belongs to the GrpE family. In terms of assembly, homodimer.

The protein localises to the cytoplasm. Functionally, participates actively in the response to hyperosmotic and heat shock by preventing the aggregation of stress-denatured proteins, in association with DnaK and GrpE. It is the nucleotide exchange factor for DnaK and may function as a thermosensor. Unfolded proteins bind initially to DnaJ; upon interaction with the DnaJ-bound protein, DnaK hydrolyzes its bound ATP, resulting in the formation of a stable complex. GrpE releases ADP from DnaK; ATP binding to DnaK triggers the release of the substrate protein, thus completing the reaction cycle. Several rounds of ATP-dependent interactions between DnaJ, DnaK and GrpE are required for fully efficient folding. The protein is Protein GrpE of Prochlorococcus marinus (strain NATL2A).